Reading from the N-terminus, the 533-residue chain is CEP295 N-terminal-like protein (533 aa).

Disordered stretches follow at residues 1-40, 84-176, 286-333, and 370-399; these read MQRD…TTLQ, RSMG…RVTR, LKAD…ETTE, and AGTS…LEDE. A coiled-coil region spans residues 40 to 72; that stretch reads QQWKARQLQRLAEELKAEWQEARLQQVRQAERL. Basic and acidic residues predominate over residues 107–126; that stretch reads KERNRAAFREERGRREEHPR. Positions 416-531 form a coiled coil; sequence MALRQKQKAE…ARKRLQEFQK (116 aa).

In terms of tissue distribution, expressed in mature spermatozoa (at protein level). Detected in retina, lung and kidney. In brain, highly expressed in brain-stem, cerebral cortex and thalamus with lesser expression in cerebellum and hippocampus.

The protein localises to the cell projection. The protein resides in the cilium. This chain is CEP295 N-terminal-like protein, found in Mus musculus (Mouse).